The following is a 129-amino-acid chain: Histone H2A.2 (129 aa).

Lys-5 is subject to N6-acetyllysine. The residue at position 108 (Gln-108) is an N5-methylglutamine.

Belongs to the histone H2A family. As to quaternary structure, the nucleosome is a histone octamer containing two molecules each of H2A, H2B, H3 and H4 assembled in one H3-H4 heterotetramer and two H2A-H2B heterodimers. The octamer wraps approximately 147 bp of DNA. Acetylated by ESA1 to form H2AK4ac.

The protein resides in the nucleus. Its subcellular location is the chromosome. Functionally, core component of nucleosome which plays a central role in DNA double strand break (DSB) repair. Nucleosomes wrap and compact DNA into chromatin, limiting DNA accessibility to the cellular machineries which require DNA as a template. Histones thereby play a central role in transcription regulation, DNA repair, DNA replication and chromosomal stability. DNA accessibility is regulated via a complex set of post-translational modifications of histones, also called histone code, and nucleosome remodeling. The chain is Histone H2A.2 (HTA2) from Lodderomyces elongisporus (strain ATCC 11503 / CBS 2605 / JCM 1781 / NBRC 1676 / NRRL YB-4239) (Yeast).